The following is a 220-amino-acid chain: ATP synthase F(0) complex subunit a (220 aa).

The next 6 membrane-spanning stretches (helical) occupy residues 12-32 (PTLL…TLLP), 69-89 (WAMI…FTPT), 91-111 (QLSL…LLGL), 130-150 (LLIP…PFAL), 158-178 (LTAG…LLPM), and 183-203 (ALLT…VAMI).

This sequence belongs to the ATPase A chain family. Component of the ATP synthase complex composed at least of ATP5F1A/subunit alpha, ATP5F1B/subunit beta, ATP5MC1/subunit c (homooctomer), MT-ATP6/subunit a, MT-ATP8/subunit 8, ATP5ME/subunit e, ATP5MF/subunit f, ATP5MG/subunit g, ATP5MK/subunit k, ATP5MJ/subunit j, ATP5F1C/subunit gamma, ATP5F1D/subunit delta, ATP5F1E/subunit epsilon, ATP5PF/subunit F6, ATP5PB/subunit b, ATP5PD/subunit d, ATP5PO/subunit OSCP. ATP synthase complex consists of a soluble F(1) head domain (subunits alpha(3) and beta(3)) - the catalytic core - and a membrane F(0) domain - the membrane proton channel (subunits c, a, 8, e, f, g, k and j). These two domains are linked by a central stalk (subunits gamma, delta, and epsilon) rotating inside the F1 region and a stationary peripheral stalk (subunits F6, b, d, and OSCP). Interacts with DNAJC30; interaction is direct.

It localises to the mitochondrion inner membrane. The catalysed reaction is H(+)(in) = H(+)(out). Its function is as follows. Subunit a, of the mitochondrial membrane ATP synthase complex (F(1)F(0) ATP synthase or Complex V) that produces ATP from ADP in the presence of a proton gradient across the membrane which is generated by electron transport complexes of the respiratory chain. ATP synthase complex consist of a soluble F(1) head domain - the catalytic core - and a membrane F(1) domain - the membrane proton channel. These two domains are linked by a central stalk rotating inside the F(1) region and a stationary peripheral stalk. During catalysis, ATP synthesis in the catalytic domain of F(1) is coupled via a rotary mechanism of the central stalk subunits to proton translocation. With the subunit c (ATP5MC1), forms the proton-conducting channel in the F(0) domain, that contains two crucial half-channels (inlet and outlet) that facilitate proton movement from the mitochondrial intermembrane space (IMS) into the matrix. Protons are taken up via the inlet half-channel and released through the outlet half-channel, following a Grotthuss mechanism. This Latimeria chalumnae (Coelacanth) protein is ATP synthase F(0) complex subunit a.